The chain runs to 742 residues: Glycine--tRNA ligase (742 aa).

The WHEP-TRS domain occupies 73-129 (KLAPLRAAVKEYGDLIRDLKAKGAPKIDIDKAVVELKARKRLLEDTEIALAPKEASF). A glycine-binding site is contributed by glutamate 309. ATP contacts are provided by residues 341-343 (RNE) and 352-353 (RV). A glycine-binding site is contributed by glutamate 360. ATP is bound at residue 467–468 (EC). Glycine is bound at residue 586-588 (EPS). Residue arginine 593 coordinates ATP.

This sequence belongs to the class-II aminoacyl-tRNA synthetase family. Homodimer.

The protein resides in the cytoplasm. Its subcellular location is the cell projection. It is found in the axon. The protein localises to the secreted. It localises to the extracellular exosome. It catalyses the reaction tRNA(Gly) + glycine + ATP = glycyl-tRNA(Gly) + AMP + diphosphate. It carries out the reaction 2 ATP + H(+) = P(1),P(4)-bis(5'-adenosyl) tetraphosphate + diphosphate. Functionally, catalyzes the ATP-dependent ligation of glycine to the 3'-end of its cognate tRNA, via the formation of an aminoacyl-adenylate intermediate (Gly-AMP). Also produces diadenosine tetraphosphate (Ap4A), a universal pleiotropic signaling molecule needed for cell regulation pathways, by direct condensation of 2 ATPs. Thereby, may play a special role in Ap4A homeostasis. In Caenorhabditis elegans, this protein is Glycine--tRNA ligase.